The chain runs to 587 residues: Serine/threonine-protein phosphatase 2A 65 kDa regulatory subunit A beta isoform (587 aa).

Position 2 is an N-acetylserine (Ser-2). 14 HEAT repeats span residues 2-42 (SMID…ALGE), 44-80 (RTRK…YVGG), 81-119 (VEYA…QMRE), 158-196 (DMLK…TVES), 197-235 (AHLK…LLEP), 236-274 (QDCV…AVGP), 275-313 (EPTR…ILNP), 315-352 (IAIQ…VLGK), 353-391 (DATI…VIGI), 393-430 (LLSQ…QLGV), 432-469 (FFDD…EFGP), 470-508 (EWAM…VMGS), 509-547 (EITC…IVDQ), and 549-586 (VVEK…VMMS).

It belongs to the phosphatase 2A regulatory subunit A family. PP2A consists of a common heterodimeric core enzyme, composed of a 36 kDa catalytic subunit (subunit C) and a 65 kDa constant regulatory subunit (subunit A), that associates with a variety of regulatory subunits such as subunits B (the R2/B/PR55/B55, R3/B''/PR72/PR130/PR59 and R5/B'/B56 families). Interacts with B'THETA. Interacts with SRK2E/OST1. Interacts with SIC/RON3. Ubiquitous, with higher levels in roots and flowers (at protein level).

It is found in the cytoplasm. The protein resides in the cytosol. Its subcellular location is the nucleus. It localises to the peroxisome. Functionally, the A subunit of protein phosphatase 2A serves as a scaffolding molecule to coordinate the assembly of the catalytic subunit and a variable regulatory B subunit. Involved during developmental process such as seedling and floral developments. Seems to act as a negative regulator of PP2A catalytic activity. Associates with the serine/threonine-protein phosphatase PP2A catalytic subunit C and regulatory subunit B' to positively regulates beta-oxidation of fatty acids and protoauxins in peroxisomes by dephosphorylating peroxisomal beta-oxidation-related proteins. This Arabidopsis thaliana (Mouse-ear cress) protein is Serine/threonine-protein phosphatase 2A 65 kDa regulatory subunit A beta isoform (PP2AA2).